Reading from the N-terminus, the 831-residue chain is MSVVGFDFGNENCLVAVARQRGIDVVLNDESNRETPAIVCFGDKQRFIGTAGAASTMMNPKNSISQIKRLIGRQFSDPELQRDIKSLPFSVTEGPDGYPLIHANYLGEIRAFTPTQVMGMMLSNLKGIAEKNLNTAVVDCCIGIPVYFTDLQRRAVLDAATIAGLHPLHLIHETTATALAYGIYKTDLPENDQLNVAFIDIGHASMQVCIAGFKKGQLKILSHAFDRSLGGRDFDEVLFNHFAAKFKDEYKIDVSQNAKASLRLRATCEKLKKVLSANPMAPLNIECLMAEKDVRGVIKREEFEEISIPILERVKRPLEKALSDAGLTVEDVHMVEVVGSGSRVPAMIKILTEFFGKEPRRTMNASECVSRGCALQCAILSPTFKVREFQVHESFPFSISLAWKGAATDAQNGGTENQQSTIVFPKGNPIPSVKALTFYRSGTFSIDVQYSDVNDLQAPPKISTYTIGPFQSSKGERAKLKVKVRLNLHGIVSVESATLLEEEEVEVSVTKDQSEETAKMDTDKASAEAAPASGDSDVNMQDAKDTSDATGTDNGVPESAEKPVQMETDSKAEAPKKKVKKTNVPLSELVYGALKTVEVEKAVEKEFEMALQDRVMEETKDRKNAVESYVYDMRNKLSDKYQEYITDSEREAFLANLQEVEDWLYEDGEDETKGVYVAKLEELKKVGDPVEVRYKESLERGSVIDQLGYCINSYREAAVSNDPKFDHIELAEKQKVLNECVEAEAWLREKQQQQDTLPKYATPALLSADVKSKAEALDKFCRPIMTKPKPAAKAEAPQAKGGEQADEGKSEPEQPASAEAMETENPAEGST.

Disordered regions lie at residues 502–579 (EEEV…KKKV) and 784–831 (IMTK…EGST). Residues 512–526 (DQSEETAKMDTDKAS) are compositionally biased toward basic and acidic residues. Ser533 and Ser536 each carry phosphoserine. Over residues 787-800 (KPKPAAKAEAPQAK) the composition is skewed to low complexity.

The protein belongs to the heat shock protein 70 (TC 1.A.33) family. HSP110/SSE subfamily.

The protein localises to the cytoplasm. It is found in the nucleus. In cooperation with other chaperones, Hsp70s are key components that facilitate folding of de novo synthesized proteins, assist translocation of precursor proteins into organelles, and are responsible for degradation of damaged protein under stress conditions. The sequence is that of Heat shock 70 kDa protein 15 (HSP70-15) from Arabidopsis thaliana (Mouse-ear cress).